The primary structure comprises 262 residues: Deaminated glutathione amidase (262 aa).

A CN hydrolase domain is found at 1–238; the sequence is MLVAAGQFAV…PALIMAEVTP (238 aa). Glutamate 40 (proton acceptor) is an active-site residue. The active-site Proton donor is lysine 110. The active-site Nucleophile is the cysteine 147.

Belongs to the carbon-nitrogen hydrolase superfamily. NIT1/NIT2 family.

The enzyme catalyses N-(4-oxoglutaryl)-L-cysteinylglycine + H2O = L-cysteinylglycine + 2-oxoglutarate. Functionally, hydrolyzes deaminated glutathione (dGSH) to 2-oxoglutarate and L-cysteinylglycine, and no activity on glutathione or L-glutamine. May function as a metabolite repair enzyme. This Escherichia coli O157:H7 protein is Deaminated glutathione amidase (ybeM).